The primary structure comprises 381 residues: 40-kDa huntingtin-associated protein (381 aa).

Position 2 is an N-acetylalanine (Ala-2). The Nuclear localization signal motif lies at 34-36 (KKR). Residues 213–260 (EHGGHPVQQPELPQQLPSVPQPSLPGPQPRPVLGSTLPLPLPPDHAPG) are disordered. Residues 218 to 230 (PVQQPELPQQLPS) are compositionally biased toward low complexity. The span at 231 to 242 (VPQPSLPGPQPR) shows a compositional bias: pro residues.

Interacts with HTT (via C-terminus). Interacts with RAB5A. Found in a complex with F8A1/F8A2/F8A3, HTT and RAB5A; mediates the recruitment of HTT by RAB5A onto early endosomes.

The protein localises to the cytoplasm. The protein resides in the nucleus. It localises to the early endosome. Its subcellular location is the nuclear body. RAB5A effector molecule that is involved in vesicular trafficking of early endosomes. Mediates the recruitment of HTT by RAB5A onto early endosomes. The HTT-F8A1/F8A2/F8A3-RAB5A complex stimulates early endosomal interaction with actin filaments and inhibits interaction with microtubules, leading to the reduction of endosome motility. The sequence is that of 40-kDa huntingtin-associated protein (F8a1) from Rattus norvegicus (Rat).